The primary structure comprises 153 residues: Aspartate carbamoyltransferase regulatory chain (153 aa).

C109, C114, C135, and C138 together coordinate Zn(2+).

This sequence belongs to the PyrI family. In terms of assembly, contains catalytic and regulatory chains. Zn(2+) is required as a cofactor.

Functionally, involved in allosteric regulation of aspartate carbamoyltransferase. The sequence is that of Aspartate carbamoyltransferase regulatory chain from Natronomonas pharaonis (strain ATCC 35678 / DSM 2160 / CIP 103997 / JCM 8858 / NBRC 14720 / NCIMB 2260 / Gabara) (Halobacterium pharaonis).